The primary structure comprises 153 residues: Glucose-6-phosphate 1-dehydrogenase (153 aa).

The NADP(+) site is built by arginine 21 and lysine 120. Lysine 120 contributes to the D-glucose 6-phosphate binding site.

Belongs to the glucose-6-phosphate dehydrogenase family.

It localises to the cytoplasm. It is found in the cytosol. It carries out the reaction D-glucose 6-phosphate + NADP(+) = 6-phospho-D-glucono-1,5-lactone + NADPH + H(+). Its pathway is carbohydrate degradation; pentose phosphate pathway; D-ribulose 5-phosphate from D-glucose 6-phosphate (oxidative stage): step 1/3. Cytosolic glucose-6-phosphate dehydrogenase that catalyzes the first and rate-limiting step of the oxidative branch within the pentose phosphate pathway/shunt, an alternative route to glycolysis for the dissimilation of carbohydrates and a major source of reducing power and metabolic intermediates for fatty acid and nucleic acid biosynthetic processes. The chain is Glucose-6-phosphate 1-dehydrogenase (ZW) from Culex pipiens (House mosquito).